The sequence spans 94 residues: Integration host factor subunit beta (94 aa).

The protein belongs to the bacterial histone-like protein family. As to quaternary structure, heterodimer of an alpha and a beta chain.

This protein is one of the two subunits of integration host factor, a specific DNA-binding protein that functions in genetic recombination as well as in transcriptional and translational control. The chain is Integration host factor subunit beta from Mannheimia succiniciproducens (strain KCTC 0769BP / MBEL55E).